Here is a 260-residue protein sequence, read N- to C-terminus: Ava biosynthesis cluster protein M (260 aa).

The first 15 residues, 1-15 (MKVLVLGLCRTGTSS), serve as a signal peptide directing secretion.

The protein belongs to the cytochrome P450 family.

Its pathway is secondary metabolite biosynthesis. Functionally, part of the cluster that mediates the biosynthesis of a highly modified cyclo-arginine-tryptophan dipeptide (cRW). The first step of the pathway is perfornmed by the arginine-containing cyclodipeptide synthase (RCPDS) avaA that acts as the scaffold-generating enzyme and is responsible for formation of the cyclo-Arg-Trp (cRW) diketopiperazine. AvaB then acts as a multifunctional flavoenzyme that is responsible for generating the cyclo-Arg-formylkynurenine DKP, which can be deformylated by avaC. AvaB then further catalyzes an additional N-oxidation followed by cyclization and dehydration. The next step is an N-acetylation of the guanidine group catalyzed by the arginine N-acetyltransferase avaD. The roles of the additional enzymes identified within the ava cluster still have to be determined. The polypeptide is Ava biosynthesis cluster protein M (Aspergillus versicolor).